The primary structure comprises 367 residues: tRNA 2-selenouridine synthase (367 aa).

One can recognise a Rhodanese domain in the interval 15–138 (FLQARPLIDV…LRTFLIQILE (124 aa)). Cys-98 acts as the S-selanylcysteine intermediate in catalysis.

Belongs to the SelU family. As to quaternary structure, monomer.

It catalyses the reaction 5-methylaminomethyl-2-thiouridine(34) in tRNA + selenophosphate + (2E)-geranyl diphosphate + H2O + H(+) = 5-methylaminomethyl-2-selenouridine(34) in tRNA + (2E)-thiogeraniol + phosphate + diphosphate. It carries out the reaction 5-methylaminomethyl-2-thiouridine(34) in tRNA + (2E)-geranyl diphosphate = 5-methylaminomethyl-S-(2E)-geranyl-thiouridine(34) in tRNA + diphosphate. The catalysed reaction is 5-methylaminomethyl-S-(2E)-geranyl-thiouridine(34) in tRNA + selenophosphate + H(+) = 5-methylaminomethyl-2-(Se-phospho)selenouridine(34) in tRNA + (2E)-thiogeraniol. The enzyme catalyses 5-methylaminomethyl-2-(Se-phospho)selenouridine(34) in tRNA + H2O = 5-methylaminomethyl-2-selenouridine(34) in tRNA + phosphate. In terms of biological role, involved in the post-transcriptional modification of the uridine at the wobble position (U34) of tRNA(Lys), tRNA(Glu) and tRNA(Gln). Catalyzes the conversion of 2-thiouridine (S2U-RNA) to 2-selenouridine (Se2U-RNA). Acts in a two-step process involving geranylation of 2-thiouridine (S2U) to S-geranyl-2-thiouridine (geS2U) and subsequent selenation of the latter derivative to 2-selenouridine (Se2U) in the tRNA chain. This is tRNA 2-selenouridine synthase from Shewanella denitrificans (strain OS217 / ATCC BAA-1090 / DSM 15013).